A 414-amino-acid chain; its full sequence is MQLVVVGAHQRTAPISIRERIAFAEAELAQALSSLRQIAVEGFILSTCNRVELYALVEEADGGRSLRQFLAQQRSIDLDELMPHVYTYLDEDAVRHLFRVASGLDSMALGEAQILSQIKTAYNAAQQTELLGTTMHRLIQAALTTGKLVRTETQLAHAQLSVVSVGLSLARQHLDLTNRSVVIIGAGRTGELALKHYLEYTSNITVLSRTFERAARLAEHHKVAAKPISELAAVLQASDVVISCTSSPELMLDFEQAQLLQAQRQRQWVLLDLAVPRDIDRHVGALPEVWLYDVDDMQAICERNRASKAAEVAGAEAIVERELIKWQEWWLTQAVLPTIRALRAHAEAIRLAELERTLARLDLSEQQQQAVSALTSAIINKLLHQPMRAIKDTAASPQLAHAAQQLFRLDFEAI.

Substrate-binding positions include 47-50 (TCNR), serine 106, 111-113 (EAQ), and glutamine 117. The Nucleophile role is filled by cysteine 48. 185–190 (GAGRTG) provides a ligand contact to NADP(+).

The protein belongs to the glutamyl-tRNA reductase family. Homodimer.

The enzyme catalyses (S)-4-amino-5-oxopentanoate + tRNA(Glu) + NADP(+) = L-glutamyl-tRNA(Glu) + NADPH + H(+). It functions in the pathway porphyrin-containing compound metabolism; protoporphyrin-IX biosynthesis; 5-aminolevulinate from L-glutamyl-tRNA(Glu): step 1/2. Functionally, catalyzes the NADPH-dependent reduction of glutamyl-tRNA(Glu) to glutamate 1-semialdehyde (GSA). The protein is Glutamyl-tRNA reductase of Herpetosiphon aurantiacus (strain ATCC 23779 / DSM 785 / 114-95).